A 245-amino-acid polypeptide reads, in one-letter code: MDSDHWISRLMAAKRQYALQRAQNHHHATATATATAASHSHLDRYGYDDVEPEDEVRPDFPCPYCYEDHDITSLCAHLEDEHPFESKVVACPVCSARISKDLLDHITLQHSYLFRLQRHHRLRRVAVPSNHALSLGGRDLQETYLKVLLGNSSRSSGTNAASSVTDSLLSSLVLNLSSSEAEDTAKFSALAVVENNWFKRTLPSKTWKASSDSNLSQEERERRRRRAAVRSSFVQHLLVSTLFDD.

It belongs to the Di19 family.

The protein is Protein DEHYDRATION-INDUCED 19 homolog 4 (DI19-4) of Oryza sativa subsp. japonica (Rice).